A 397-amino-acid chain; its full sequence is LIM/homeobox protein Lhx9 (397 aa).

LIM zinc-binding domains are found at residues 69-130 (ALCA…RFSV) and 131-193 (QRCA…LLQG). 2 disordered regions span residues 248 to 272 (ENEA…RMRT) and 330 to 364 (ENGG…TLTD). Residues 267 to 326 (TKRMRTSFKHHQLRTMKSYFAINHNPDAKDLKQLAQKTGLTKRVLQVWFQNARAKFRRNL) constitute a DNA-binding region (homeobox).

In terms of assembly, interacts with LDB1 and LDB2.

The protein localises to the nucleus. Functionally, involved in gonadal development. The protein is LIM/homeobox protein Lhx9 (LHX9) of Bos taurus (Bovine).